A 227-amino-acid chain; its full sequence is LysM and putative peptidoglycan-binding domain-containing protein 1 (227 aa).

Residues 1–11 show a composition bias toward pro residues; it reads MASPSRQPPPG. Residues 1 to 22 are disordered; that stretch reads MASPSRQPPPGGSGLLQGSRAR. Phosphoserine occurs at positions 23 and 33. The LysM domain occupies 40 to 84; sequence LEHQLEPGDTLAGLALKYGVTMEQIKRANRLYTNDSIFLKKTLYI. The tract at residues 97–150 is disordered; it reads LDSEEEKDGEEKVHPSNSEVWPHSTERKKQETGAGRANGEVLPTPGQETPTPIH. A phosphoserine mark is found at serine 99, serine 166, serine 194, and serine 212.

This chain is LysM and putative peptidoglycan-binding domain-containing protein 1 (LYSMD1), found in Homo sapiens (Human).